We begin with the raw amino-acid sequence, 1029 residues long: U2 snRNP-associated SURP motif-containing protein (1029 aa).

2 disordered regions span residues 1–110 (MADK…KEDE) and 141–273 (VNAA…DPST). N-acetylalanine is present on A2. Positions 7–16 (GGSQKASSKN) are enriched in polar residues. Positions 45–54 (TRPKSPRKHN) are enriched in basic residues. Over residues 55–64 (YRNESSRESL) the composition is skewed to basic and acidic residues. S67 bears the Phosphoserine mark. K80 is covalently cross-linked (Glycyl lysine isopeptide (Lys-Gly) (interchain with G-Cter in SUMO2)). Positions 92–121 (AKRTLSKKEQEELKKKEDEKAAAEIYEEFL) form a coiled coil. Basic and acidic residues-rich tracts occupy residues 97–110 (SKKEQEELKKKEDE) and 144–155 (AKDEHETDEKRG). Residues K145 and K168 each participate in a glycyl lysine isopeptide (Lys-Gly) (interchain with G-Cter in SUMO2) cross-link. Residues 169 to 178 (NPPNQSSNER) show a composition bias toward polar residues. Positions 186–222 (ETKKPPLKKGEKEKKKSNLELFKEELKQIQEERDERH) are enriched in basic and acidic residues. Residues 192-232 (LKKGEKEKKKSNLELFKEELKQIQEERDERHKTKGRLSRFE) are a coiled coil. A Phosphoserine modification is found at S202. A Glycyl lysine isopeptide (Lys-Gly) (interchain with G-Cter in SUMO2) cross-link involves residue K208. A Phosphoserine modification is found at S236. Residues 239–249 (DGQRRSMDVPS) are compositionally biased toward basic and acidic residues. Positions 274-355 (TNLYLGNINP…FEMKLGWGKA (82 aa)) constitute an RRM domain. The stretch at 430-473 (LIHRMIEFVVREGPMFEAMIMNREINNPMFRFLFENQTPAHVYY) is one SURP motif repeat. A Phosphoserine modification is found at S485. In terms of domain architecture, CID spans 534-679 (LKEEQRDKLE…KLQNIFLGLV (146 aa)). The disordered stretch occupies residues 704-729 (DGAPLEDVDGIPIDATPIDDLDGVPI). T719 carries the post-translational modification Phosphothreonine. Residues K748 and K749 each participate in a glycyl lysine isopeptide (Lys-Gly) (interchain with G-Cter in SUMO2) cross-link. Residue K760 is modified to N6-acetyllysine; alternate. K760 is covalently cross-linked (Glycyl lysine isopeptide (Lys-Gly) (interchain with G-Cter in SUMO2); alternate). 2 disordered regions span residues 778 to 841 (KWEL…EEKR) and 855 to 1029 (QDEL…KNKH). Acidic residues predominate over residues 786-806 (EESEEEENQNQEEESEDEEDT). S788, S800, and S811 each carry phosphoserine. 2 stretches are compositionally biased toward basic and acidic residues: residues 810–841 (KSEEHHLYSNPVREEATESKFSKYSEMSEEKR) and 874–922 (QVEH…TPTR). Residues K829 and K832 each participate in a glycyl lysine isopeptide (Lys-Gly) (interchain with G-Cter in SUMO2) cross-link. The stretch at 837–915 (SEEKRAKLRE…ESRSKDKKEK (79 aa)) forms a coiled coil. Residue T931 is modified to Phosphothreonine. Phosphoserine occurs at positions 946 and 948. The segment covering 950–980 (KSERSERSERSHKESSRSRSSHKDSPRDASK) has biased composition (basic and acidic residues). A compositionally biased stretch (basic residues) spans 991–1029 (TPKRSRRSRSRSPKKSGKKSRSQSRSPHRSHKKSKKNKH).

Belongs to the splicing factor SR family. As to quaternary structure, interacts with ERBB4.

It localises to the nucleus. The chain is U2 snRNP-associated SURP motif-containing protein (U2surp) from Mus musculus (Mouse).